We begin with the raw amino-acid sequence, 630 residues long: Plastin-3 (630 aa).

2 EF-hand domains span residues 12–47 and 52–87; these read DELDELKEAFAKVDLNSNGFICDYELHELFKEANMP and KVREIIQKLMLDGDRNKDGKISFDEFVYIFQEVKSS. Ca(2+)-binding residues include Asp-25, Asn-27, Asn-29, Glu-36, Asp-65, Asn-67, Asp-69, Lys-71, and Glu-76. 2 actin-binding regions span residues 109-382 and 383-627; these read TSEL…ALTK and PENQ…GRGM. Calponin-homology (CH) domains follow at residues 123-239 and 267-378; these read EEEK…KIGL and LSPE…NKYP. Residues Ser-268, Ser-293, Ser-326, and Ser-339 each carry the phosphoserine modification. Phosphothreonine is present on Thr-391. 2 Calponin-homology (CH) domains span residues 397-506 and 518-627; these read TREE…RRYT and KAND…GRGM.

Monomer.

It is found in the cytoplasm. Functionally, actin-bundling protein. The protein is Plastin-3 (PLS3) of Bos taurus (Bovine).